The chain runs to 280 residues: Serine protease 33 (280 aa).

A signal peptide spans 1–22; the sequence is MRGVSCLQVLLLLVLGAAGTQG. The Peptidase S1 domain occupies 37 to 279; sequence IVGGRDGRDG…YSPWIQARVS (243 aa). Residues C62 and C78 are joined by a disulfide bond. Active-site charge relay system residues include H77 and D126. 3 disulfide bridges follow: C160/C237, C193/C216, and C227/C255. S231 acts as the Charge relay system in catalysis.

The protein belongs to the peptidase S1 family. As to expression, predominantly expressed in macrophages. Present in the spleen, small and large intestine, lung and brain (at protein level). Highly expressed in peripheral leukocytes, ovary, retina, spleen and stomach. Moderately expressed in thymus, uterus and platelets, as well as some brain tissues, such as thalamus and fetal brain.

The protein resides in the secreted. Serine protease that has amidolytic activity, cleaving its substrates before Arg residues. This chain is Serine protease 33 (PRSS33), found in Homo sapiens (Human).